The chain runs to 477 residues: Bifunctional enzyme PyrF/PyrE (477 aa).

The OMP decarboxylase stretch occupies residues 1-273 (MIFFDKLHQN…ITVRDVASCS (273 aa)). The Proton donor role is filled by Lys-96. The segment at 274–477 (VWLPDVFTVK…DEQFLALTAE (204 aa)) is orotate phosphoribosyltransferase. Residues Arg-374, Lys-375, Lys-378, His-380, and 400–408 (DDILISGKS) each bind 5-phospho-alpha-D-ribose 1-diphosphate.

This sequence in the N-terminal section; belongs to the OMP decarboxylase family. Type 2 subfamily. It in the C-terminal section; belongs to the purine/pyrimidine phosphoribosyltransferase family. Mg(2+) serves as cofactor.

The catalysed reaction is orotidine 5'-phosphate + H(+) = UMP + CO2. It carries out the reaction orotidine 5'-phosphate + diphosphate = orotate + 5-phospho-alpha-D-ribose 1-diphosphate. Its pathway is pyrimidine metabolism; UMP biosynthesis via de novo pathway; UMP from orotate: step 1/2. It functions in the pathway pyrimidine metabolism; UMP biosynthesis via de novo pathway; UMP from orotate: step 2/2. Catalyzes the transfer of a ribosyl phosphate group from 5-phosphoribose 1-diphosphate to orotate, leading to the formation of orotidine monophosphate (OMP). Its function is as follows. Catalyzes the decarboxylation of orotidine monophosphate (OMP) to uridine monophosphate (UMP). The sequence is that of Bifunctional enzyme PyrF/PyrE (pyrFE) from Nostoc sp. (strain PCC 7120 / SAG 25.82 / UTEX 2576).